Reading from the N-terminus, the 461-residue chain is Cysteine--tRNA ligase (461 aa).

Residue C28 participates in Zn(2+) binding. A 'HIGH' region motif is present at residues 30 to 40; sequence ITVYDLCHIGH. C209, H234, and E238 together coordinate Zn(2+). The 'KMSKS' region signature appears at 266–270; the sequence is KMSKS. K269 serves as a coordination point for ATP.

It belongs to the class-I aminoacyl-tRNA synthetase family. In terms of assembly, monomer. It depends on Zn(2+) as a cofactor.

Its subcellular location is the cytoplasm. The enzyme catalyses tRNA(Cys) + L-cysteine + ATP = L-cysteinyl-tRNA(Cys) + AMP + diphosphate. This is Cysteine--tRNA ligase from Salmonella agona (strain SL483).